We begin with the raw amino-acid sequence, 499 residues long: Bifunctional purine biosynthesis protein PurH (499 aa).

In terms of domain architecture, MGS-like spans 1 to 144; that stretch reads MIKRALISVF…KNFKDVVVLT (144 aa).

Belongs to the PurH family.

The enzyme catalyses (6R)-10-formyltetrahydrofolate + 5-amino-1-(5-phospho-beta-D-ribosyl)imidazole-4-carboxamide = 5-formamido-1-(5-phospho-D-ribosyl)imidazole-4-carboxamide + (6S)-5,6,7,8-tetrahydrofolate. It catalyses the reaction IMP + H2O = 5-formamido-1-(5-phospho-D-ribosyl)imidazole-4-carboxamide. It functions in the pathway purine metabolism; IMP biosynthesis via de novo pathway; 5-formamido-1-(5-phospho-D-ribosyl)imidazole-4-carboxamide from 5-amino-1-(5-phospho-D-ribosyl)imidazole-4-carboxamide (10-formyl THF route): step 1/1. The protein operates within purine metabolism; IMP biosynthesis via de novo pathway; IMP from 5-formamido-1-(5-phospho-D-ribosyl)imidazole-4-carboxamide: step 1/1. This is Bifunctional purine biosynthesis protein PurH from Clostridium botulinum (strain Hall / ATCC 3502 / NCTC 13319 / Type A).